Reading from the N-terminus, the 352-residue chain is UPF0324 membrane protein blr3189 (352 aa).

Transmembrane regions (helical) follow at residues 21–43 (IAAL…LLER), 53–71 (YVEA…RSFW), 88–110 (LLEV…ASGI), 114–136 (ASIA…LLGL), 143–165 (LIAC…IIGA), 175–197 (SFTA…LLQL), 204–226 (ILAG…AGLV), 236–253 (LMRV…SLVA), 265–284 (VGFF…LATL), 294–316 (VVGP…LGLG), and 329–351 (VTAA…VHWF).

The protein belongs to the UPF0324 family.

The protein localises to the cell membrane. The sequence is that of UPF0324 membrane protein blr3189 from Bradyrhizobium diazoefficiens (strain JCM 10833 / BCRC 13528 / IAM 13628 / NBRC 14792 / USDA 110).